Reading from the N-terminus, the 210-residue chain is NAD(P)H-quinone oxidoreductase subunit I (210 aa).

4Fe-4S ferredoxin-type domains follow at residues 54–83 (GRIH…VDWV) and 94–123 (YSYS…VTED). [4Fe-4S] cluster contacts are provided by cysteine 63, cysteine 66, cysteine 69, cysteine 73, cysteine 103, cysteine 106, cysteine 109, and cysteine 113.

The protein belongs to the complex I 23 kDa subunit family. In terms of assembly, NDH-1 is composed of at least 11 different subunits. [4Fe-4S] cluster is required as a cofactor.

The protein resides in the cellular thylakoid membrane. It carries out the reaction a plastoquinone + NADH + (n+1) H(+)(in) = a plastoquinol + NAD(+) + n H(+)(out). It catalyses the reaction a plastoquinone + NADPH + (n+1) H(+)(in) = a plastoquinol + NADP(+) + n H(+)(out). NDH-1 shuttles electrons from an unknown electron donor, via FMN and iron-sulfur (Fe-S) centers, to quinones in the respiratory and/or the photosynthetic chain. The immediate electron acceptor for the enzyme in this species is believed to be plastoquinone. Couples the redox reaction to proton translocation, and thus conserves the redox energy in a proton gradient. This chain is NAD(P)H-quinone oxidoreductase subunit I, found in Synechococcus sp. (strain JA-3-3Ab) (Cyanobacteria bacterium Yellowstone A-Prime).